A 352-amino-acid chain; its full sequence is Ion-translocating oxidoreductase complex subunit D (352 aa).

5 helical membrane-spanning segments follow: residues Ile20 to Gly40, Gly42 to Leu62, Ala78 to Ala109, Pro123 to Leu143, and Ile148 to Ala168. Position 187 is an FMN phosphoryl threonine (Thr187). 5 helical membrane passes run Ile214 to Leu234, Trp242 to Phe262, Leu267 to Leu287, Leu301 to Pro321, and Asp322 to Thr342.

The protein belongs to the NqrB/RnfD family. The complex is composed of six subunits: RsxA, RsxB, RsxC, RsxD, RsxE and RsxG. It depends on FMN as a cofactor.

Its subcellular location is the cell inner membrane. Functionally, part of a membrane-bound complex that couples electron transfer with translocation of ions across the membrane. Required to maintain the reduced state of SoxR. The protein is Ion-translocating oxidoreductase complex subunit D of Shigella dysenteriae serotype 1 (strain Sd197).